The chain runs to 446 residues: Oxysterols receptor LXR-beta (446 aa).

Low complexity predominate over residues 1–28; sequence MSSPTSSLDTPLPGNGSPQPSTSSTSPT. The interval 1–69 is disordered; the sequence is MSSPTSSLDT…PERKRKKGPA (69 aa). The interval 1–76 is transactivation AF-1; required for ligand-independent transactivation function; it reads MSSPTSSLDT…GPAPKMLGHE (76 aa). Residues 75-152 constitute a DNA-binding region (nuclear receptor); the sequence is HELCRVCGDK…AGMREQCVLS (78 aa). NR C4-type zinc fingers lie at residues 78 to 98 and 116 to 140; these read CRVCGDKASGFHYNVLSCEGC and CRGSGTCQMDAFMRRKCQLCRLRKC. Residues 160–201 form a disordered region; that stretch reads KIQKQQQQQPPPPTEPASGSSARPAASPGTSEASSQGSGEGE. Residues 175–196 show a composition bias toward low complexity; it reads PASGSSARPAASPGTSEASSQG. The transactivation AF-2; required for ligand-dependent transactivation function; mediates interaction with CCAR2 stretch occupies residues 205–446; sequence LTAAQELMIQ…LLSEIWDVHE (242 aa). The NR LBD domain maps to 208–446; it reads AQELMIQQLV…LLSEIWDVHE (239 aa). Residues Lys395 and Lys433 each participate in a glycyl lysine isopeptide (Lys-Gly) (interchain with G-Cter in SUMO2) cross-link.

It belongs to the nuclear hormone receptor family. NR1 subfamily. As to quaternary structure, forms a heterodimer with RXR. Interacts with CCAR2 (via N-terminus) in a ligand-independent manner. Interacts (when sumoylated) with GPS2; interaction with GPS2 onto hepatic acute phase protein promoters prevents N-Cor corepressor complex dissociation. Interacts with ABCA12 and ABCA1; this interaction is required for ABCA1 localization to the cell surface and is necessary for its normal activity and stability. Sumoylated by SUMO2 at Lys-395 and Lys-433 during the hepatic acute phase response, leading to promote interaction with GPS2 and prevent N-Cor corepressor complex dissociation.

It localises to the nucleus. Functionally, nuclear receptor that exhibits a ligand-dependent transcriptional activation activity. Binds preferentially to double-stranded oligonucleotide direct repeats having the consensus half-site sequence 5'-AGGTCA-3' and 4-nt spacing (DR-4). Regulates cholesterol uptake through MYLIP-dependent ubiquitination of LDLR, VLDLR and LRP8; DLDLR and LRP8. Interplays functionally with RORA for the regulation of genes involved in liver metabolism. Induces LPCAT3-dependent phospholipid remodeling in endoplasmic reticulum (ER) membranes of hepatocytes, driving SREBF1 processing and lipogenesis. Via LPCAT3, triggers the incorporation of arachidonate into phosphatidylcholines of ER membranes, increasing membrane dynamics and enabling triacylglycerols transfer to nascent very low-density lipoprotein (VLDL) particles. Via LPCAT3 also counteracts lipid-induced ER stress response and inflammation, likely by modulating SRC kinase membrane compartmentalization and limiting the synthesis of lipid inflammatory mediators. Plays an anti-inflammatory role during the hepatic acute phase response by acting as a corepressor: inhibits the hepatic acute phase response by preventing dissociation of the N-Cor corepressor complex. In Rattus norvegicus (Rat), this protein is Oxysterols receptor LXR-beta (Nr1h2).